The chain runs to 268 residues: Undecaprenyl-diphosphatase (268 aa).

The next 7 helical transmembrane spans lie at 5–25, 43–63, 84–104, 106–126, 184–204, 213–233, and 248–268; these read SIISALVLGLIEGLTEFIPVS, GNTFAVLIQLGAILAILLVYF, FSVLIAFLPAALIGAAAHGFI, AVLFETPMLICVVLIVGGVIL, AAEFSFFLAMPTMLGAFTLDL, FDDIGVIAIGFIAAFVAGIVV, and PFAIWRIVVGTAGLVGLWLVG.

It belongs to the UppP family.

The protein localises to the cell inner membrane. It carries out the reaction di-trans,octa-cis-undecaprenyl diphosphate + H2O = di-trans,octa-cis-undecaprenyl phosphate + phosphate + H(+). Its function is as follows. Catalyzes the dephosphorylation of undecaprenyl diphosphate (UPP). Confers resistance to bacitracin. In Sinorhizobium fredii (strain NBRC 101917 / NGR234), this protein is Undecaprenyl-diphosphatase.